The primary structure comprises 572 residues: Phospholipase B-like protein B (572 aa).

Positions 1–28 (MNKLKSNFILNIVILFTILIFNINFINC) are cleaved as a signal peptide. Residues asparagine 73, asparagine 138, asparagine 219, asparagine 427, asparagine 544, and asparagine 564 are each glycosylated (N-linked (GlcNAc...) asparagine).

This sequence belongs to the phospholipase B-like family.

The protein localises to the secreted. Probable phospholipase. This is Phospholipase B-like protein B (plbB) from Dictyostelium discoideum (Social amoeba).